A 129-amino-acid chain; its full sequence is Probable protein cornichon homolog 2 (129 aa).

The next 2 helical transmembrane spans lie at Phe45–Leu65 and Leu105–Asp125.

Belongs to the cornichon family.

The protein localises to the membrane. This chain is Probable protein cornichon homolog 2, found in Arabidopsis thaliana (Mouse-ear cress).